The sequence spans 624 residues: Bifunctional 3'-phosphoadenosine 5'-phosphosulfate synthase 1 (624 aa).

M1 is subject to N-acetylmethionine. Positions 1–225 (MELPGSLCKK…VVELLQERDI (225 aa)) are adenylyl-sulfate kinase. An N6-acetyllysine modification is found at K12. Residue 62-67 (GAGKTT) coordinates ATP. Adenosine 5'-phosphosulfate contacts are provided by residues 89–92 (DNIR), F101, 106–109 (REEN), 132–133 (IS), K171, and 184–185 (GF). ATP contacts are provided by residues C207, C212, 419–422 (QLRN), 521–525 (GRDPA), and A563. The interval 234-624 (VKELYVPENK…AEYYKALEKA (391 aa)) is sulfate adenylyltransferase.

It in the N-terminal section; belongs to the APS kinase family. In the C-terminal section; belongs to the sulfate adenylyltransferase family. Homodimer.

The catalysed reaction is sulfate + ATP + H(+) = adenosine 5'-phosphosulfate + diphosphate. It catalyses the reaction adenosine 5'-phosphosulfate + ATP = 3'-phosphoadenylyl sulfate + ADP + H(+). The protein operates within sulfur metabolism; sulfate assimilation. Its function is as follows. Bifunctional enzyme with both ATP sulfurylase and APS kinase activity, which mediates two steps in the sulfate activation pathway. The first step is the transfer of a sulfate group to ATP to yield adenosine 5'-phosphosulfate (APS), and the second step is the transfer of a phosphate group from ATP to APS yielding 3'-phosphoadenylylsulfate (PAPS: activated sulfate donor used by sulfotransferase). In mammals, PAPS is the sole source of sulfate; APS appears to be only an intermediate in the sulfate-activation pathway. Required for normal biosynthesis of sulfated L-selectin ligands in endothelial cells. The protein is Bifunctional 3'-phosphoadenosine 5'-phosphosulfate synthase 1 (PAPSS1) of Cavia porcellus (Guinea pig).